Consider the following 298-residue polypeptide: Junctional adhesion molecule B (298 aa).

Positions 1-28 (MARSPQGLLMLLLLHYLIVALDYHKANG) are cleaved as a signal peptide. Over 29 to 236 (FSASKDHRQE…GKRMQVDVLN (208 aa)) the chain is Extracellular. Residues 32 to 128 (SKDHRQEVTV…GQNLQEDKVM (97 aa)) form the Ig-like V-type domain. Cystine bridges form between Cys51–Cys110 and Cys156–Cys214. A glycan (N-linked (GlcNAc...) asparagine) is linked at Asn99. The region spanning 135 to 238 (PAVPACEVPT…RMQVDVLNIS (104 aa)) is the Ig-like C2-type domain. The chain crosses the membrane as a helical span at residues 237–257 (ISGIIATVVVVAFVISVCGLG). Over 258–298 (TCYAQRKGYFSKETSFQKGSPASKVTTMSENDFKHTKSFII) the chain is Cytoplasmic.

Belongs to the immunoglobulin superfamily. Post-translationally, the expression in Sertoli cells is regulated by TGFB3 through ubiquitin-mediated proteasomal degradation. Expressed by bone marrow stromal cells (at protein level). Expressed in skin (at protein level). Expressed in testis by Sertoli cells (at protein level). Expressed by dorsal root ganglion and spinal cord neurons.

The protein resides in the cell membrane. It is found in the cell junction. It localises to the tight junction. Junctional adhesion protein that mediates heterotypic cell-cell interactions with its cognate receptor JAM3 to regulate different cellular processes. Plays a role in homing and mobilization of hematopoietic stem and progenitor cells within the bone marrow. At the surface of bone marrow stromal cells, it contributes to the retention of the hematopoietic stem and progenitor cells expressing JAM3. Plays a central role in leukocytes extravasation by facilitating not only transmigration but also tethering and rolling of leukocytes along the endothelium. Tethering and rolling of leukocytes are dependent on the binding by JAM2 of the integrin alpha-4/beta-1. Plays a role in spermatogenesis where JAM2 and JAM3, which are respectively expressed by Sertoli and germ cells, mediate an interaction between both cell types and play an essential role in the anchorage of germ cells onto Sertoli cells and the assembly of cell polarity complexes during spermatid differentiation. Also functions as an inhibitory somatodendritic cue that prevents the myelination of non-axonal parts of neurons. During myogenesis, it is involved in myocyte fusion. May also play a role in angiogenesis. This chain is Junctional adhesion molecule B, found in Mus musculus (Mouse).